Consider the following 194-residue polypeptide: Putative adenylate kinase (194 aa).

ATP-binding residues include Gly16, Gly18, Lys19, Thr20, and Thr21. Residues 36–59 (SVGELLAGTPYVTYIPELDTYEIV) are NMP. The tract at residues 108-118 (RRGWPLKKILD) is LID. Arg109 is an ATP binding site.

The protein belongs to the adenylate kinase family. AK6 subfamily. Interacts with uS11. Not a structural component of 40S pre-ribosomes, but transiently interacts with them by binding to uS11.

It carries out the reaction AMP + ATP = 2 ADP. The catalysed reaction is ATP + H2O = ADP + phosphate + H(+). Its function is as follows. Broad-specificity nucleoside monophosphate (NMP) kinase that catalyzes the reversible transfer of the terminal phosphate group between nucleoside triphosphates and monophosphates. Also has ATPase activity. Involved in the late maturation steps of the 30S ribosomal particles, specifically 16S rRNA maturation. While NMP activity is not required for ribosome maturation, ATPase activity is. Associates transiently with small ribosomal subunit protein uS11. ATP hydrolysis breaks the interaction with uS11. May temporarily remove uS11 from the ribosome to enable a conformational change of the ribosomal RNA that is needed for the final maturation step of the small ribosomal subunit. This chain is Putative adenylate kinase, found in Pyrobaculum aerophilum (strain ATCC 51768 / DSM 7523 / JCM 9630 / CIP 104966 / NBRC 100827 / IM2).